A 332-amino-acid polypeptide reads, in one-letter code: Inositol 2-dehydrogenase 2 (332 aa).

Belongs to the Gfo/Idh/MocA family. In terms of assembly, homotetramer.

The enzyme catalyses myo-inositol + NAD(+) = scyllo-inosose + NADH + H(+). Involved in the oxidation of myo-inositol (MI) to 2-keto-myo-inositol (2KMI or 2-inosose). This chain is Inositol 2-dehydrogenase 2, found in Paenarthrobacter aurescens (strain TC1).